Consider the following 52-residue polypeptide: UPF0181 protein VPA0916 (52 aa).

This sequence belongs to the UPF0181 family.

The sequence is that of UPF0181 protein VPA0916 from Vibrio parahaemolyticus serotype O3:K6 (strain RIMD 2210633).